Reading from the N-terminus, the 190-residue chain is PBP1-interacting protein LSM12 (190 aa).

Residues 2–69 (PVCNNDSQLI…IKEVTALRDN (68 aa)) enclose the Sm domain. The AD domain occupies 84 to 190 (PSMQAARDRS…ERVQKTLSKK (107 aa)).

This sequence belongs to the LSM12 family. As to quaternary structure, forms a complex composed of at least MKT1, PBP1, XAC1 and LSM12. Forms a complex composed of at least MKT1L, PBP1, XAC1 and LSM12. Within the complex, interacts with PBP1; the interaction is direct.

In terms of biological role, involved in post-transcriptional regulation of gene expression. The chain is PBP1-interacting protein LSM12 from Trypanosoma brucei brucei (strain 927/4 GUTat10.1).